A 249-amino-acid polypeptide reads, in one-letter code: Phosphate import ATP-binding protein PstB 2 (249 aa).

One can recognise an ABC transporter domain in the interval 4-244 (IEVRDLDLFY…PKDKRTEDYI (241 aa)). 36–43 (GPSGCGKS) contacts ATP.

Belongs to the ABC transporter superfamily. Phosphate importer (TC 3.A.1.7) family. The complex is composed of two ATP-binding proteins (PstB), two transmembrane proteins (PstC and PstA) and a solute-binding protein (PstS).

Its subcellular location is the cell membrane. It catalyses the reaction phosphate(out) + ATP + H2O = ADP + 2 phosphate(in) + H(+). Functionally, part of the ABC transporter complex PstSACB involved in phosphate import. Responsible for energy coupling to the transport system. The chain is Phosphate import ATP-binding protein PstB 2 from Caldanaerobacter subterraneus subsp. tengcongensis (strain DSM 15242 / JCM 11007 / NBRC 100824 / MB4) (Thermoanaerobacter tengcongensis).